The following is a 204-amino-acid chain: Pectinesterase inhibitor 9 (204 aa).

A signal peptide spans 1–23; sequence MELKNTIFLVILLSITILQSSSA. Asn26 carries an N-linked (GlcNAc...) asparagine glycan. 2 disulfides stabilise this stretch: Cys38-Cys47 and Cys106-Cys157.

The protein belongs to the PMEI family. Binds reversibly to PME3 to inhibit its activity; the stability of the PME3-PMEI9 complex and the inhibition of the pectin methylesterase (PME) activity is pH-dependent, based on protonation status of amino-acids at the complex interface. In terms of tissue distribution, highly expressed in roots and etiolated hypocotyls. Expressed in seedlings, leaves, stems, siliques, floral buds and mature seeds.

It localises to the secreted. Its subcellular location is the extracellular space. It is found in the apoplast. In terms of biological role, pectin methylesterase (PME) inhibitor that probably targets root-expressed PME and PME3 in a moderate pH-dependent manner, mainly in slightly acidic conditions (pH 6.3 and 5.0) and to some extent at pH 7.5; this processus relies on changes in the protonation of amino acids involved in intermolecular and intramolecular interactions. Regulates de-methylesterification of pectins in roots and affects root growth. This chain is Pectinesterase inhibitor 9, found in Arabidopsis thaliana (Mouse-ear cress).